Here is a 3726-residue protein sequence, read N- to C-terminus: Zinc finger homeobox protein 3 (3726 aa).

Disordered regions lie at residues 1–79 and 95–129; these read MEGC…SKEV and MEHHCPGTHPPPALREESASDTSEEGEEESDVENL. The C2H2-type 1 zinc finger occupies 79-103; sequence VSCNECSASFSSLQTYMEHHCPGTH. A compositionally biased stretch (acidic residues) spans 116–126; it reads TSEEGEEESDV. The C2H2-type 2 zinc finger occupies 282-305; sequence LMCFLCKLSFGYVRSFVTHAVHDH. Residues 417–557 form a disordered region; sequence SVPLGPLASS…GPASTTSNSA (141 aa). S426 is modified (phosphoserine). The residue at position 428 (T428) is a Phosphothreonine. The segment covering 431-459 has biased composition (basic and acidic residues); sequence SEGKDSGAAEGDKQESGGHQDCFSEKVEP. Acidic residues-rich tracts occupy residues 460 to 491 and 500 to 510; these read AEEEEAEEEEEEEEEAEEEEEEEEEEEEEEEE and DLEEELEDSPS. Residues 528–557 show a composition bias toward polar residues; sequence SNPSISNSPLMPNVLQTLSRGPASTTSNSA. A phosphoserine mark is found at S535 and S573. Residues 590–621 are disordered; sequence DFADESANKDSATAPEPNESTEGDDGGFVPHH. 3 consecutive C2H2-type zinc fingers follow at residues 641-664, 672-695, and 727-751; these read VECPKCDTVLGSSRSLGGHMTMMH, LKCPKCNWHYKYQQTLEAHMKEKH, and FRCEVCNYSTTTKGNLSIHMQSDKH. The segment at 805-829 adopts a C2H2-type 6; atypical zinc-finger fold; the sequence is WRCEVCDYETNVARNLRIHMTSEKH. Residues 946-969 form a C2H2-type 7; degenerate zinc finger; the sequence is FQCAVCNKFTTDNLDMLGLHMNVE. The segment at 985 to 1009 adopts a C2H2-type 8; atypical zinc-finger fold; sequence YQCKLCRYNTQLKANFQLHCKTDKH. The C2H2-type 9; atypical zinc finger occupies 1041–1065; that stretch reads LKCNACDYYTNSLEKLRLHTVNSRH. A C2H2-type 10; atypical zinc finger spans residues 1089–1113; it reads YHCVLCNYSTKAKLNLIQHVRSMKH. Positions 1125-1228 are disordered; the sequence is LQKGLPEEDE…KRPKASEEIK (104 aa). Acidic residues predominate over residues 1149–1159; the sequence is DPEEPVEDAEG. Composition is skewed to polar residues over residues 1175 to 1191 and 1199 to 1217; these read GSGSEEGQSKRAASSSQ and SPATTKRTSFPGSSETPLS. A Phosphoserine modification is found at S1207. Residues 1233 to 1256 form a C2H2-type 11; atypical zinc finger; that stretch reads YQCPYCKYSNADVNRLRVHAMTQH. A C2H2-type 12 zinc finger spans residues 1262–1285; sequence LRCPLCQDMLNNKIHLQLHLTHLH. Positions 1320–1361 are disordered; the sequence is DGNSTLEEVGKQPEASEDPGKNILPPASMEHGGDLKPTSADP. C2H2-type zinc fingers lie at residues 1370-1395, 1411-1433, and 1439-1462; these read FLCWKKGCNQVFKTSATLQTHFNEVH, YRCNQCSLAFKTIEKLQLHSQYH, and TMCCLCQRSFRTFQALKKHLETSH. The tract at residues 1500–1539 is disordered; sequence EEDKEEESDLEDKQSPTGSDSGSVQEDSGSEPKRALPFRK. Residues 1514–1526 show a composition bias toward polar residues; sequence SPTGSDSGSVQED. The segment at 1555 to 1579 adopts a C2H2-type 16 zinc-finger fold; that stretch reads YKCTVCKESFTQKNILLVHYNSVSH. S1600 carries the phosphoserine modification. Residues 1606–1630 form a C2H2-type 17 zinc finger; it reads FKCNTCNVAYSQSSTLEIHMRSVLH. Disordered stretches follow at residues 1639–1678, 1706–1738, and 1866–1943; these read LEAASGNSNGTGNSGGVSLSSSTPSPVGSSGANNTFTATN, NPISANIASPSEPKEANRKKLADMIASRQQQQQ, and LSQS…PRIA. The segment covering 1643-1669 has biased composition (low complexity); that stretch reads SGNSNGTGNSGGVSLSSSTPSPVGSSG. A compositionally biased stretch (basic and acidic residues) spans 1717–1727; sequence EPKEANRKKLA. Low complexity predominate over residues 1866 to 1878; that stretch reads LSQSHSALLQPSQ. Positions 1879 to 1902 are enriched in basic and acidic residues; the sequence is HPEKKNKVVIKEKDKESQREREGP. Residues 1990–2013 form a C2H2-type 18 zinc finger; that stretch reads LECDSCGKLFSNILILKSHQEHVH. Disordered regions lie at residues 2037–2089 and 2211–2249; these read YPLR…AQPS and NKDSPYNFSNPPITSLEELKIDSRPPSPEPQKQEYWGSK. Residues 2041–2066 are compositionally biased toward pro residues; that stretch reads PQTPEPPPPPPPPPPPPLPTAPPQPA. The homeobox 1 DNA-binding region spans 2152-2211; that stretch reads NKRPRTRITDDQLRVLRQYFDINNSPSEEQIKEMADKSGLPQKVIKHWFRNTLFKERQRN. Residues 2214-2223 are compositionally biased toward polar residues; it reads SPYNFSNPPI. A DNA-binding region (homeobox 2) is located at residues 2249–2308; sequence KRSSRTRFTDYQLRVLQDFFDANAYPKDDEFEQLSNLLNLPTRVIVVWFQNARQKARKNY. The C2H2-type 19; atypical zinc-finger motif lies at 2335–2358; that stretch reads YQCKKCSLVFQRIFDLIKHQKKLC. K2356 participates in a covalent cross-link: Glycyl lysine isopeptide (Lys-Gly) (interchain with G-Cter in SUMO1). 2 disordered regions span residues 2383–2405 and 2429–2529; these read TPTSSSCSTPMPSQAYSTPAPSA and NSKA…PQQL. Residues 2458 to 2478 show a composition bias toward low complexity; that stretch reads QPKPEMQQQLEQLEQKTNAPQ. The span at 2479–2507 shows a compositional bias: pro residues; that stretch reads PKLPQPAAPSLPQPPPQAPPPQCPLPQSS. Over residues 2508–2521 the composition is skewed to low complexity; the sequence is PSPSQLSHLPLKPL. The C2H2-type 20 zinc-finger motif lies at 2539–2561; the sequence is YQCDQCKLAFPSFEHWQEHQQLH. The Nuclear localization signal signature appears at 2624–2626; sequence KRK. The tract at residues 2628–2656 is disordered; it reads EEKASASPGENDSGTGGEEPQRDKRLRTT. S2634 is modified (phosphoserine). The homeobox 3 DNA-binding region spans 2650-2709; sequence DKRLRTTITPEQLEILYQKYLLDSNPTRKMLDHIAHEVGLKKRVVQVWFQNTRARERKGQ. A C2H2-type 21 zinc finger spans residues 2720-2743; the sequence is RRCPFCRALFKAKTALEAHIRSRH. The span at 2780-2789 shows a compositional bias: polar residues; the sequence is SHLPPSSSDG. Residues 2780 to 2805 are disordered; sequence SHLPPSSSDGQGVPLSPVSKTMELSP. S2795 and S2804 each carry phosphoserine. K2815 participates in a covalent cross-link: Glycyl lysine isopeptide (Lys-Gly) (interchain with G-Cter in SUMO1); alternate. K2815 is covalently cross-linked (Glycyl lysine isopeptide (Lys-Gly) (interchain with G-Cter in SUMO2); alternate). The tract at residues 2850–2877 is disordered; it reads AITDTTTGDEGNADNDSATGIATETKSS. Phosphoserine is present on residues S2900 and S2904. The segment at 2920-2955 is disordered; it reads VDYSETSSLADPCSPSPGASGSAGKSGDGGDRPGQK. Residues 2929-2944 show a composition bias toward low complexity; the sequence is ADPCSPSPGASGSAGK. The segment at residues 2952–3011 is a DNA-binding region (homeobox 4); sequence PGQKRFRTQMTNLQLKVLKSCFNDYRTPTMLECEVLGNDIGLPKRVVQVWFQNARAKEKK. Residues 3032–3056 form a C2H2-type 22 zinc finger; that stretch reads TECTLCGIKYSARLSVRDHIFSQQH. Disordered regions lie at residues 3145–3274 and 3415–3476; these read FTPA…AGTG and QQQQ…SASA. The span at 3147–3156 shows a compositional bias: polar residues; that stretch reads PANTALTSPK. The span at 3181-3199 shows a compositional bias: low complexity; that stretch reads PSSASLSSPTPAQATMAMA. A compositionally biased stretch (pro residues) spans 3200-3221; sequence PQPPPQPQQPQPPVQQPPPPPA. Residues 3222 to 3234 are compositionally biased toward low complexity; it reads AQQIPAPQLTPQQ. Positions 3235–3267 are enriched in basic and acidic residues; the sequence is QRKDKDGEKGKEKEKAHKGKGEPLPVPKKEKGE. Residue K3262 forms a Glycyl lysine isopeptide (Lys-Gly) (interchain with G-Cter in SUMO1) linkage. Position 3434 is a phosphoserine (S3434). Over residues 3435-3453 the composition is skewed to basic and acidic residues; that stretch reads PDKDPAKESPKPEEQKNVP. A Phosphoserine modification is found at S3457. The C2H2-type 23 zinc finger occupies 3552 to 3576; it reads YHCLACESALCGEEALSQHLESALH. Residues 3588–3726 form a disordered region; sequence AKEHPSLLPH…TSVGTDTFRL (139 aa). Composition is skewed to low complexity over residues 3605-3618 and 3645-3677; these read STASTSQSAAHSND and SRASAAKPPSFPPLSSSSTVTSSSCSTSGVQPS. S3616 is subject to Phosphoserine. S3700 is modified (phosphoserine). Positions 3715 to 3726 are enriched in polar residues; it reads GLTSVGTDTFRL.

As to quaternary structure, interacts with ALKBH4 and PIAS3. Interacts with FNBP3. Interacts with ESR1, RUNX3, TRIM25, SMAD2 and SMAD3. Phosphorylated at Ser-2634 in both embryonic and adult brain. Phosphorylation at Ser-1600, Ser-2795, Ser-2804, Ser-2900, Ser-3434, Ser-3616 and Ser-3700 is restricted to the embryonic brain. Hyperphosphorylation in embryonic brain protects ZFHX3 from calpain/CAPN1-mediated degradation. Post-translationally, ubiquitinated, leading to its proteasomal degradation. In terms of processing, nuclear localization is essential for its sumoylation. As to expression, expressed in suprachiasmatic nucleus (SCN) of the brain (at protein level). Expressed in skeletal muscle. Levels of expression are high in myoblasts but low in differentiated muscle. Expressed in the heart, primarily in the atria.

The protein resides in the nucleus. Its subcellular location is the cytoplasm. Functionally, transcriptional regulator which can act as an activator or a repressor. Inhibits the enhancer element of the AFP gene by binding to its AT-rich core sequence. In concert with SMAD-dependent TGF-beta signaling can repress the transcription of AFP via its interaction with SMAD2/3. Regulates the circadian locomotor rhythms via transcriptional activation of neuropeptidergic genes which are essential for intercellular synchrony and rhythm amplitude in the suprachiasmatic nucleus (SCN) of the brain. Regulator of myoblasts differentiation through the binding to the AT-rich sequence of MYF6 promoter and promoter repression. Down-regulates the MUC5AC promoter in gastric cancer. In association with RUNX3, up-regulates CDKN1A promoter activity following TGF-beta stimulation. This is Zinc finger homeobox protein 3 (Zfhx3) from Mus musculus (Mouse).